The chain runs to 1755 residues: Transposon TyH3 Gag-Pol polyprotein (1755 aa).

Composition is skewed to polar residues over residues 1–23 (MESQQLSQHSPNSHGSACASVTS), 48–60 (TKANSQQTTTPAS), and 127–152 (QSQFPQYPSSVGTPLSTPSPESGNTF). Disordered regions lie at residues 1–93 (MESQ…MMTQ), 126–173 (PQSQ…RPPP), and 352–421 (GSRN…SKST). The span at 153-165 (TDSSSADSDMTST) shows a compositional bias: low complexity. The segment at 299-401 (NNGIHINNKV…NSKSKTARAH (103 aa)) is RNA-binding. Over residues 402–418 (NVSTSNNSPSTDNDSIS) the composition is skewed to low complexity. Ser416 bears the Phosphoserine mark. The For protease activity; shared with dimeric partner role is filled by Asp461. Residues 583-640 (NVHTSESTRKYPYPFIHRMLAHANAQTIRYSLKNNTITYFNESDVDWSSAIDYQCPDC) are integrase-type zinc finger-like. The Integrase catalytic domain occupies 660–835 (NSYEPFQYLH…AGLDISTLLP (176 aa)). Mg(2+)-binding residues include Asp671 and Asp736. Disordered regions lie at residues 956–1087 (SKAV…ETEK), 1092–1111 (RSPSIDASPPENNSSHNIVP), and 1130–1187 (DLPL…DNET). Over residues 960–969 (SPTDSTPPST) the composition is skewed to low complexity. Residues 1005 to 1015 (STPQISNIEST) show a composition bias toward polar residues. A compositionally biased stretch (basic and acidic residues) spans 1038-1053 (ESSHASKSKDFRHSDS). Composition is skewed to polar residues over residues 1054–1082 (YSENETNHTNVPISSTGGTNNKTVPQISD) and 1101–1111 (PENNSSHNIVP). The Bipartite nuclear localization signal motif lies at 1178 to 1212 (KKRSLEDNETEIKVSRDTWNTKNMRSLEPPRSKKR). Positions 1338 to 1476 (NNYYITQLDI…DILGLEIKYQ (139 aa)) constitute a Reverse transcriptase Ty1/copia-type domain. Residues Asp1346, Asp1427, Asp1428, Asp1610, Glu1652, and Asp1685 each coordinate Mg(2+). The RNase H Ty1/copia-type domain maps to 1610–1752 (DASYGNQPYY…IKTFKLLTNK (143 aa)).

In terms of assembly, the capsid protein forms a homotrimer, from which the VLPs are assembled. The protease is a homodimer, whose active site consists of two apposed aspartic acid residues. Initially, virus-like particles (VLPs) are composed of the structural unprocessed proteins Gag and Gag-Pol, and also contain the host initiator methionine tRNA (tRNA(i)-Met) which serves as a primer for minus-strand DNA synthesis, and a dimer of genomic Ty RNA. Processing of the polyproteins occurs within the particle and proceeds by an ordered pathway, called maturation. First, the protease (PR) is released by autocatalytic cleavage of the Gag-Pol polyprotein yielding capsid protein p45 and a Pol-p154 precursor protein. This cleavage is a prerequisite for subsequent processing of Pol-p154 at the remaining sites to release the mature structural and catalytic proteins. Maturation takes place prior to the RT reaction and is required to produce transposition-competent VLPs.

The protein localises to the cytoplasm. It is found in the nucleus. The catalysed reaction is DNA(n) + a 2'-deoxyribonucleoside 5'-triphosphate = DNA(n+1) + diphosphate. It catalyses the reaction Endonucleolytic cleavage to 5'-phosphomonoester.. Capsid protein (CA) is the structural component of the virus-like particle (VLP), forming the shell that encapsulates the retrotransposons dimeric RNA genome. The particles are assembled from trimer-clustered units and there are holes in the capsid shells that allow for the diffusion of macromolecules. CA also has nucleocapsid-like chaperone activity, promoting primer tRNA(i)-Met annealing to the multipartite primer-binding site (PBS), dimerization of Ty1 RNA and initiation of reverse transcription. Its function is as follows. The aspartyl protease (PR) mediates the proteolytic cleavages of the Gag and Gag-Pol polyproteins after assembly of the VLP. Functionally, reverse transcriptase/ribonuclease H (RT) is a multifunctional enzyme that catalyzes the conversion of the retro-elements RNA genome into dsDNA within the VLP. The enzyme displays a DNA polymerase activity that can copy either DNA or RNA templates, and a ribonuclease H (RNase H) activity that cleaves the RNA strand of RNA-DNA heteroduplexes during plus-strand synthesis and hydrolyzes RNA primers. The conversion leads to a linear dsDNA copy of the retrotransposon that includes long terminal repeats (LTRs) at both ends. In terms of biological role, integrase (IN) targets the VLP to the nucleus, where a subparticle preintegration complex (PIC) containing at least integrase and the newly synthesized dsDNA copy of the retrotransposon must transit the nuclear membrane. Once in the nucleus, integrase performs the integration of the dsDNA into the host genome. This Saccharomyces cerevisiae (Baker's yeast) protein is Transposon TyH3 Gag-Pol polyprotein (TY1B).